Here is a 313-residue protein sequence, read N- to C-terminus: PDCD10 and GCKIII kinases-associated protein 1 (313 aa).

The disordered stretch occupies residues 40-89 (RLKGTQNSEVEVPRNALHDGSLSNSESRGSTTGLPHQGPLPQEDSEERPC). Phosphoserine occurs at positions 60 and 64. Residues 60–73 (SLSNSESRGSTTGL) are compositionally biased toward polar residues. Thr104 is subject to Phosphothreonine. Phosphoserine is present on residues Ser107, Ser237, and Ser240. The interval 253-286 (YFKEEGPTHPTPAADSGSEREDPHTYNGDREGVV) is disordered. The span at 269–285 (GSEREDPHTYNGDREGV) shows a compositional bias: basic and acidic residues.

As to quaternary structure, interacts with KEAP1; this interaction prevents the ubiquitination of KEAP1 by TRIM25, thus protecting KEAP1 from degradation. Found in association with PDCD10 and members of the STE20 kinases, such as STK24, STK25 and STK26.

Its subcellular location is the cell membrane. In terms of biological role, acts as a tumor suppressor. Acts as a tumor suppressor for colorectal cancer cell proliferation by targeting KEAP1/USP17/ELK1/CDK6 axis. This chain is PDCD10 and GCKIII kinases-associated protein 1, found in Mus musculus (Mouse).